We begin with the raw amino-acid sequence, 261 residues long: Acetylglutamate kinase (261 aa).

Residues 45 to 46, Arg-67, and Asn-162 each bind substrate; that span reads GG.

It belongs to the acetylglutamate kinase family. ArgB subfamily.

The protein localises to the cytoplasm. It catalyses the reaction N-acetyl-L-glutamate + ATP = N-acetyl-L-glutamyl 5-phosphate + ADP. The protein operates within amino-acid biosynthesis; L-arginine biosynthesis; N(2)-acetyl-L-ornithine from L-glutamate: step 2/4. In terms of biological role, catalyzes the ATP-dependent phosphorylation of N-acetyl-L-glutamate. The polypeptide is Acetylglutamate kinase (Bacteroides fragilis (strain ATCC 25285 / DSM 2151 / CCUG 4856 / JCM 11019 / LMG 10263 / NCTC 9343 / Onslow / VPI 2553 / EN-2)).